The primary structure comprises 149 residues: Calmodulin-like protein 3 (149 aa).

4 EF-hand domains span residues 8–43, 44–79, 81–116, and 117–149; these read EQIA…LGQN, PTEA…KMKD, DSEE…LGEK, and LSDE…LVSK. Ca(2+) is bound by residues Asp21, Asp23, Asp25, Ser27, Glu32, Asp57, Asp59, Asn61, Thr63, Glu68, Asp94, Asp96, Asn98, Glu105, Asp130, Asp132, Asp134, Gln136, and Glu141.

The protein belongs to the calmodulin family. As to quaternary structure, interacts with MYO10, the interaction is calcium-dependent and essential for MYO10 function in filopodial extension.

In terms of biological role, may function as a specific light chain of unconventional myosin-10 (MYO10), also enhances MYO10 translation, possibly by acting as a chaperone for the emerging MYO10 heavy chain protein. May compete with calmodulin by binding, with different affinities, to cellular substrates. This Mus musculus (Mouse) protein is Calmodulin-like protein 3 (Calml3).